The primary structure comprises 225 residues: 2-C-methyl-D-erythritol 4-phosphate cytidylyltransferase (225 aa).

Belongs to the IspD/TarI cytidylyltransferase family. IspD subfamily.

It catalyses the reaction 2-C-methyl-D-erythritol 4-phosphate + CTP + H(+) = 4-CDP-2-C-methyl-D-erythritol + diphosphate. Its pathway is isoprenoid biosynthesis; isopentenyl diphosphate biosynthesis via DXP pathway; isopentenyl diphosphate from 1-deoxy-D-xylulose 5-phosphate: step 2/6. Catalyzes the formation of 4-diphosphocytidyl-2-C-methyl-D-erythritol from CTP and 2-C-methyl-D-erythritol 4-phosphate (MEP). The polypeptide is 2-C-methyl-D-erythritol 4-phosphate cytidylyltransferase (Cereibacter sphaeroides (strain KD131 / KCTC 12085) (Rhodobacter sphaeroides)).